The chain runs to 310 residues: Cytochrome f (310 aa).

The signal sequence occupies residues M1–A23. Positions 28, 48, 51, and 52 each coordinate heme. Residues I277–K297 form a helical membrane-spanning segment.

This sequence belongs to the cytochrome f family. As to quaternary structure, the 4 large subunits of the cytochrome b6-f complex are cytochrome b6, subunit IV (17 kDa polypeptide, PetD), cytochrome f and the Rieske protein, while the 4 small subunits are PetG, PetL, PetM and PetN. The complex functions as a dimer. Heme is required as a cofactor.

The protein localises to the cellular thylakoid membrane. Component of the cytochrome b6-f complex, which mediates electron transfer between photosystem II (PSII) and photosystem I (PSI), cyclic electron flow around PSI, and state transitions. This is Cytochrome f from Synechococcus sp. (strain CC9311).